A 387-amino-acid chain; its full sequence is S-adenosylmethionine synthase (387 aa).

Residue H16 participates in ATP binding. D18 lines the Mg(2+) pocket. E44 provides a ligand contact to K(+). Positions 57 and 100 each coordinate L-methionine. Residues 100 to 110 (QSPDIAQGVDE) are flexible loop. ATP contacts are provided by residues 167 to 169 (DAK), 232 to 233 (RF), D241, 247 to 248 (RK), A264, and K268. D241 is a binding site for L-methionine. An L-methionine-binding site is contributed by K272.

Belongs to the AdoMet synthase family. Homotetramer; dimer of dimers. Requires Mg(2+) as cofactor. K(+) serves as cofactor.

Its subcellular location is the cytoplasm. It carries out the reaction L-methionine + ATP + H2O = S-adenosyl-L-methionine + phosphate + diphosphate. It functions in the pathway amino-acid biosynthesis; S-adenosyl-L-methionine biosynthesis; S-adenosyl-L-methionine from L-methionine: step 1/1. Functionally, catalyzes the formation of S-adenosylmethionine (AdoMet) from methionine and ATP. The overall synthetic reaction is composed of two sequential steps, AdoMet formation and the subsequent tripolyphosphate hydrolysis which occurs prior to release of AdoMet from the enzyme. In Janthinobacterium sp. (strain Marseille) (Minibacterium massiliensis), this protein is S-adenosylmethionine synthase.